A 198-amino-acid polypeptide reads, in one-letter code: Ribosome maturation factor RimP (198 aa).

This sequence belongs to the RimP family.

It is found in the cytoplasm. Its function is as follows. Required for maturation of 30S ribosomal subunits. This Rhizobium rhizogenes (strain K84 / ATCC BAA-868) (Agrobacterium radiobacter) protein is Ribosome maturation factor RimP.